We begin with the raw amino-acid sequence, 1228 residues long: Calcium-transporting ATPase (1228 aa).

At 1–63 (MEEVIKNAHT…FELILNQFDD (63 aa)) the chain is on the cytoplasmic side. The helical transmembrane segment at 64 to 81 (LLVKILLLAAFISFVLTL) threads the bilayer. Residues 82–92 (LDMKHKKIEIC) are Extracellular-facing. The chain crosses the membrane as a helical span at residues 93–112 (DFIEPLVIVLILILNAAVGV). At 113–270 (WQECNAEKSL…IDLFGQQLSK (158 aa)) the chain is on the cytoplasmic side. The chain crosses the membrane as a helical span at residues 271-291 (IIFVICVTVWIINFKHFSDPI). Topologically, residues 292 to 300 (HGSFLYGCL) are extracellular. The chain crosses the membrane as a helical span at residues 301–321 (YYFKISVALAVAAIPEGLPAV). Topologically, residues 322–974 (ITTCLALGTR…IYNNMKAFIR (653 aa)) are cytoplasmic. Residue D358 is the 4-aspartylphosphate intermediate of the active site. Disordered regions lie at residues 452 to 478 (MKND…IPLK) and 562 to 613 (MPAE…LKNA). The segment covering 589–604 (FFSSKNDNSHITSTLN) has biased composition (polar residues). Position 716 (K716) interacts with ATP. Residues 975-994 (YLISSNIGEVASIFITALLG) form a helical membrane-spanning segment. The Extracellular portion of the chain corresponds to 995–1000 (IPDSLA). The helical transmembrane segment at 1001–1021 (PVQLLWVNLVTDGLPATALGF) threads the bilayer. At 1022–1042 (NPPEHDVMKCKPRHKNDNLIN) the chain is on the cytoplasmic side. A helical transmembrane segment spans residues 1043–1067 (GLTLLRYIIIGTYVGIATVSIFVYW). Residues 1068 to 1118 (FLFYPDSDMHTLINFYQLSHYNQCKAWNNFRVNKVYDMSEDHCSYFSAGKI) lie on the Extracellular side of the membrane. Residues 1119 to 1140 (KASTLSLSVLVLIEMFNALNAL) form a helical membrane-spanning segment. Residues 1141-1151 (SEYNSLFEIPP) lie on the Cytoplasmic side of the membrane. A helical membrane pass occupies residues 1152-1172 (WRNMYLVLATIGSLLLHVLIL). Over 1173-1185 (YIPPLARIFGVVP) the chain is Extracellular. The helical transmembrane segment at 1186-1206 (LSAYDWFLVFLWSFPVIILDE) threads the bilayer. Over 1207–1228 (IIKFYAKRKLKEEQRTKKIKID) the chain is Cytoplasmic.

It belongs to the cation transport ATPase (P-type) (TC 3.A.3) family.

It is found in the membrane. The enzyme catalyses Ca(2+)(in) + ATP + H2O = Ca(2+)(out) + ADP + phosphate + H(+). Functionally, this magnesium-dependent enzyme catalyzes the hydrolysis of ATP coupled with the transport of the calcium. The polypeptide is Calcium-transporting ATPase (ATP6) (Plasmodium falciparum (isolate K1 / Thailand)).